A 199-amino-acid chain; its full sequence is Recombination protein RecR (199 aa).

A C4-type zinc finger spans residues 57–72; the sequence is CEICGNMDTKNICHIC. Positions 80–175 constitute a Toprim domain; the sequence is STIAIVETVA…KISRLASGIP (96 aa).

It belongs to the RecR family.

Its function is as follows. May play a role in DNA repair. It seems to be involved in an RecBC-independent recombinational process of DNA repair. It may act with RecF and RecO. This chain is Recombination protein RecR, found in Rickettsia typhi (strain ATCC VR-144 / Wilmington).